Reading from the N-terminus, the 390-residue chain is tRNA-specific 2-thiouridylase MnmA (390 aa).

ATP is bound by residues 29–36 and L55; that span reads GLSGGVDS. C116 acts as the Nucleophile in catalysis. C116 and C225 are disulfide-bonded. G141 is an ATP binding site. The interaction with tRNA stretch occupies residues 175–177; the sequence is KDQ. The active-site Cysteine persulfide intermediate is the C225. The interval 330–331 is interaction with tRNA; that stretch reads RY.

It belongs to the MnmA/TRMU family.

The protein localises to the cytoplasm. It carries out the reaction S-sulfanyl-L-cysteinyl-[protein] + uridine(34) in tRNA + AH2 + ATP = 2-thiouridine(34) in tRNA + L-cysteinyl-[protein] + A + AMP + diphosphate + H(+). Functionally, catalyzes the 2-thiolation of uridine at the wobble position (U34) of tRNA, leading to the formation of s(2)U34. The chain is tRNA-specific 2-thiouridylase MnmA from Prochlorococcus marinus (strain MIT 9515).